Reading from the N-terminus, the 388-residue chain is Large ribosomal subunit protein uL3B (388 aa).

Basic and acidic residues predominate over residues 1–10 (MSHCKFEQPR). The segment at 1–34 (MSHCKFEQPRHGSLGFLPRKRASRQRGKVKAFPK) is disordered. Basic residues predominate over residues 18 to 31 (PRKRASRQRGKVKA).

Belongs to the universal ribosomal protein uL3 family. In terms of assembly, component of the large ribosomal subunit (LSU). Mature yeast ribosomes consist of a small (40S) and a large (60S) subunit. The 40S small subunit contains 1 molecule of ribosomal RNA (18S rRNA) and at least 33 different proteins. The large 60S subunit contains 3 rRNA molecules (25S, 5.8S and 5S rRNA) and at least 46 different proteins. uL3 forms together with ES39L one of the contact sites for the signal recognition particle that targets ribosomes to the endoplasmic reticulum membrane.

The protein localises to the cytoplasm. Functionally, component of the ribosome, a large ribonucleoprotein complex responsible for the synthesis of proteins in the cell. The small ribosomal subunit (SSU) binds messenger RNAs (mRNAs) and translates the encoded message by selecting cognate aminoacyl-transfer RNA (tRNA) molecules. The large subunit (LSU) contains the ribosomal catalytic site termed the peptidyl transferase center (PTC), which catalyzes the formation of peptide bonds, thereby polymerizing the amino acids delivered by tRNAs into a polypeptide chain. The nascent polypeptides leave the ribosome through a tunnel in the LSU and interact with protein factors that function in enzymatic processing, targeting, and the membrane insertion of nascent chains at the exit of the ribosomal tunnel. uL3 plays a role in coordinating processes of accommodating the aminoacyl-tRNA in the PTC. The chain is Large ribosomal subunit protein uL3B (rpl302) from Schizosaccharomyces pombe (strain 972 / ATCC 24843) (Fission yeast).